The sequence spans 153 residues: 6,7-dimethyl-8-ribityllumazine synthase (153 aa).

5-amino-6-(D-ribitylamino)uracil-binding positions include W22, 56–58, and 80–82; these read SYE and AVI. A (2S)-2-hydroxy-3-oxobutyl phosphate-binding site is contributed by 85 to 86; the sequence is AT. The Proton donor role is filled by H88. L113 serves as a coordination point for 5-amino-6-(D-ribitylamino)uracil. R127 contacts (2S)-2-hydroxy-3-oxobutyl phosphate.

This sequence belongs to the DMRL synthase family.

It carries out the reaction (2S)-2-hydroxy-3-oxobutyl phosphate + 5-amino-6-(D-ribitylamino)uracil = 6,7-dimethyl-8-(1-D-ribityl)lumazine + phosphate + 2 H2O + H(+). It functions in the pathway cofactor biosynthesis; riboflavin biosynthesis; riboflavin from 2-hydroxy-3-oxobutyl phosphate and 5-amino-6-(D-ribitylamino)uracil: step 1/2. Catalyzes the formation of 6,7-dimethyl-8-ribityllumazine by condensation of 5-amino-6-(D-ribitylamino)uracil with 3,4-dihydroxy-2-butanone 4-phosphate. This is the penultimate step in the biosynthesis of riboflavin. The polypeptide is 6,7-dimethyl-8-ribityllumazine synthase (Herpetosiphon aurantiacus (strain ATCC 23779 / DSM 785 / 114-95)).